Reading from the N-terminus, the 350-residue chain is Putative ATP-binding protein BruAb2_0487 (350 aa).

The ABC transporter domain maps to 4–234 (VSLRGISKTF…PANKFVAGFI (231 aa)). Residue 36–43 (GPSGCGKS) coordinates ATP.

Belongs to the ABC transporter superfamily. In terms of assembly, the complex is composed of two ATP-binding proteins (BruAb2_0487), two transmembrane proteins (BruAb2_0483) and a solute-binding protein (BruAb2_0484).

It is found in the cell inner membrane. Probably part of an ABC transporter complex. Probably responsible for energy coupling to the transport system. In Brucella abortus biovar 1 (strain 9-941), this protein is Putative ATP-binding protein BruAb2_0487.